The primary structure comprises 868 residues: Translation initiation factor IF-2 (868 aa).

A compositionally biased stretch (basic and acidic residues) spans 103–183 (RSELPETSDR…RQAAAERETV (81 aa)). Positions 103–274 (RSELPETSDR…GRPMLMPEQK (172 aa)) are disordered. Over residues 190 to 207 (VAAPPIPRPAPEPRPPAR) the composition is skewed to pro residues. The span at 213-254 (PKAEAPRAHPAERETEARGDKRSAGLSRKDEYRELQGDDFRK) shows a compositional bias: basic and acidic residues. Over residues 255 to 264 (GGGKRKKPKT) the composition is skewed to basic residues. One can recognise a tr-type G domain in the interval 369-538 (PRPPVVTIMG…LVQAEVLELK (170 aa)). The G1 stretch occupies residues 378-385 (GHVDHGKT). 378–385 (GHVDHGKT) is a GTP binding site. The tract at residues 403–407 (GITQH) is G2. Positions 424–427 (DTPG) are G3. GTP-binding positions include 424–428 (DTPGH) and 478–481 (NKMD). The G4 stretch occupies residues 478–481 (NKMD). The G5 stretch occupies residues 514 to 516 (SAK).

It belongs to the TRAFAC class translation factor GTPase superfamily. Classic translation factor GTPase family. IF-2 subfamily.

Its subcellular location is the cytoplasm. Its function is as follows. One of the essential components for the initiation of protein synthesis. Protects formylmethionyl-tRNA from spontaneous hydrolysis and promotes its binding to the 30S ribosomal subunits. Also involved in the hydrolysis of GTP during the formation of the 70S ribosomal complex. This is Translation initiation factor IF-2 from Methylococcus capsulatus (strain ATCC 33009 / NCIMB 11132 / Bath).